A 158-amino-acid chain; its full sequence is MSTAPTAPTVAELEEQERRLVFRRFTNDDAWALGSLLVELAREREAPVAIDIHRAGQQLFHAALPGSAPDNDAWIARKRRVVERYGSASYLVGSRFRAKGTTFEESSRLDPDAYAAHGGSFPVTVAGVGVVGAVTVSGLPQVEDHRLVVEALERFIGE.

This sequence belongs to the UPF0303 family.

The sequence is that of UPF0303 protein SCO2848 from Streptomyces coelicolor (strain ATCC BAA-471 / A3(2) / M145).